The following is a 319-amino-acid chain: GTP 3',8-cyclase (319 aa).

Residues Lys4–Leu227 form the Radical SAM core domain. Position 13 (Arg13) interacts with GTP. [4Fe-4S] cluster is bound by residues Cys20 and Cys24. Tyr26 provides a ligand contact to S-adenosyl-L-methionine. Residue Cys27 participates in [4Fe-4S] cluster binding. Arg63 lines the GTP pocket. Gly67 is a binding site for S-adenosyl-L-methionine. Position 94 (Thr94) interacts with GTP. Position 118 (Ser118) interacts with S-adenosyl-L-methionine. A GTP-binding site is contributed by Lys155. Met189 provides a ligand contact to S-adenosyl-L-methionine. 2 residues coordinate [4Fe-4S] cluster: Cys249 and Cys252. GTP is bound at residue Arg254 to Arg256. Cys266 serves as a coordination point for [4Fe-4S] cluster.

This sequence belongs to the radical SAM superfamily. MoaA family. In terms of assembly, monomer and homodimer. [4Fe-4S] cluster is required as a cofactor.

The catalysed reaction is GTP + AH2 + S-adenosyl-L-methionine = (8S)-3',8-cyclo-7,8-dihydroguanosine 5'-triphosphate + 5'-deoxyadenosine + L-methionine + A + H(+). The protein operates within cofactor biosynthesis; molybdopterin biosynthesis. Functionally, catalyzes the cyclization of GTP to (8S)-3',8-cyclo-7,8-dihydroguanosine 5'-triphosphate. This Clostridium botulinum (strain ATCC 19397 / Type A) protein is GTP 3',8-cyclase.